A 640-amino-acid chain; its full sequence is Threonine--tRNA ligase (640 aa).

Residues 1–61 (MPTITLPDGS…THDATLQIIT (61 aa)) enclose the TGS domain. The catalytic stretch occupies residues 242 to 533 (DHRKIGKQLD…LIEHYAGVFP (292 aa)). 3 residues coordinate Zn(2+): C333, H384, and H510.

Belongs to the class-II aminoacyl-tRNA synthetase family. In terms of assembly, homodimer. Zn(2+) serves as cofactor.

It localises to the cytoplasm. The catalysed reaction is tRNA(Thr) + L-threonine + ATP = L-threonyl-tRNA(Thr) + AMP + diphosphate + H(+). In terms of biological role, catalyzes the attachment of threonine to tRNA(Thr) in a two-step reaction: L-threonine is first activated by ATP to form Thr-AMP and then transferred to the acceptor end of tRNA(Thr). Also edits incorrectly charged L-seryl-tRNA(Thr). In Pseudomonas putida (strain W619), this protein is Threonine--tRNA ligase.